The chain runs to 1032 residues: Caspase recruitment domain-containing protein 10 (1032 aa).

Disordered stretches follow at residues 1–23 (MPGR…SEAE), 253–276 (RARG…EPDN), and 481–553 (EFPS…MSDI). A Phosphoserine modification is found at Ser18. A CARD domain is found at 23–115 (EEDALWERIE…EHFTLLTGQE (93 aa)). The stretch at 138–456 (TEVRRLREAR…LEVQLQRAQG (319 aa)) forms a coiled coil. Basic and acidic residues-rich tracts occupy residues 261–276 (AEEK…EPDN) and 504–517 (HNSE…KEIN).

In terms of assembly, CARD10 and BCL10 bind to each other by CARD-CARD interaction. They both participate in a complex with MALT1, where MALT1 binds to BCL10. Interacts with TMEM43; this interaction is essential for EGFR-mediated NF-kappa-B activation. Detected in adult heart, kidney and liver; lower levels in intestine, placenta, muscle and lung. Also found in fetal lung, liver and kidney.

It localises to the cytoplasm. Functionally, scaffold protein that plays an important role in mediating the activation of NF-kappa-B via BCL10 or EGFR. The sequence is that of Caspase recruitment domain-containing protein 10 (CARD10) from Homo sapiens (Human).